The primary structure comprises 557 residues: Dihydroxy-acid dehydratase (557 aa).

Asp78 is a Mg(2+) binding site. Cys119 serves as a coordination point for [2Fe-2S] cluster. 2 residues coordinate Mg(2+): Asp120 and Lys121. Lys121 bears the N6-carboxylysine mark. Residue Cys192 coordinates [2Fe-2S] cluster. Residue Glu442 coordinates Mg(2+). Ser468 serves as the catalytic Proton acceptor.

This sequence belongs to the IlvD/Edd family. As to quaternary structure, homodimer. The cofactor is [2Fe-2S] cluster. It depends on Mg(2+) as a cofactor.

It carries out the reaction (2R)-2,3-dihydroxy-3-methylbutanoate = 3-methyl-2-oxobutanoate + H2O. It catalyses the reaction (2R,3R)-2,3-dihydroxy-3-methylpentanoate = (S)-3-methyl-2-oxopentanoate + H2O. Its pathway is amino-acid biosynthesis; L-isoleucine biosynthesis; L-isoleucine from 2-oxobutanoate: step 3/4. The protein operates within amino-acid biosynthesis; L-valine biosynthesis; L-valine from pyruvate: step 3/4. In terms of biological role, functions in the biosynthesis of branched-chain amino acids. Catalyzes the dehydration of (2R,3R)-2,3-dihydroxy-3-methylpentanoate (2,3-dihydroxy-3-methylvalerate) into 2-oxo-3-methylpentanoate (2-oxo-3-methylvalerate) and of (2R)-2,3-dihydroxy-3-methylbutanoate (2,3-dihydroxyisovalerate) into 2-oxo-3-methylbutanoate (2-oxoisovalerate), the penultimate precursor to L-isoleucine and L-valine, respectively. This Bacillus cereus (strain ATCC 10987 / NRS 248) protein is Dihydroxy-acid dehydratase.